Consider the following 81-residue polypeptide: RNA-binding protein Hfq (81 aa).

Residues 9–68 (DPFLNVLRRERVPVFIYLINGIKLQGEIESFDKFVILLRNTVNQMIYKHAISTIVPSRVV) enclose the Sm domain.

The protein belongs to the Hfq family. As to quaternary structure, homohexamer.

RNA chaperone that binds small regulatory RNA (sRNAs) and mRNAs to facilitate mRNA translational regulation in response to envelope stress, environmental stress and changes in metabolite concentrations. Also binds with high specificity to tRNAs. The chain is RNA-binding protein Hfq from Blochmanniella pennsylvanica (strain BPEN).